Consider the following 467-residue polypeptide: MSDDTTQIEPAMAQETSPRANTRKVFVKTYGCQMNVYDSQRMADSLAAEGYVATDTPDDADLVLLNTCHIREKASEKLYSALGRLRKMKDARAADGKELTIGVAGCVAQAEGQEILRRAPNVDLVIGPQTYHRLPNALARVRGGEKVVETDYAIEDKFEHLPAPRREETRKRGVSAFLTVQEGCDKFCTFCVVPYTRGSEVSRSVKQIVAEAERLADSGVRELTLLGQNVNAWHGEGEDGREWGLGELLFRLARIPGIARLRYTTSHPRDMDDSLIAAHRDLRQLMPYLHLPVQSGSDRILKAMNRRHKADEYLRLIERIRNVRPDMALSGDFIVGFPGETDQDFEDTMQLVRDVNYAQAYSFKYSPRPGTPGADLDDHVEEAVKDERLQRLQALLSAQQYAFQDSMIGRKMDVLLEKPGREAGQMVGRSPWLLPVIIDDNKDRVGDIIHVKIVSTGTNSLIAQKLA.

A disordered region spans residues 1-20 (MSDDTTQIEPAMAQETSPRA). The MTTase N-terminal domain occupies 23 to 143 (RKVFVKTYGC…LPNALARVRG (121 aa)). [4Fe-4S] cluster is bound by residues C32, C68, C106, C184, C188, and C191. Positions 170 to 402 (RKRGVSAFLT…QALLSAQQYA (233 aa)) constitute a Radical SAM core domain. Residues 405–467 (DSMIGRKMDV…TNSLIAQKLA (63 aa)) enclose the TRAM domain.

The protein belongs to the methylthiotransferase family. MiaB subfamily. In terms of assembly, monomer. [4Fe-4S] cluster is required as a cofactor.

It is found in the cytoplasm. The enzyme catalyses N(6)-dimethylallyladenosine(37) in tRNA + (sulfur carrier)-SH + AH2 + 2 S-adenosyl-L-methionine = 2-methylsulfanyl-N(6)-dimethylallyladenosine(37) in tRNA + (sulfur carrier)-H + 5'-deoxyadenosine + L-methionine + A + S-adenosyl-L-homocysteine + 2 H(+). Catalyzes the methylthiolation of N6-(dimethylallyl)adenosine (i(6)A), leading to the formation of 2-methylthio-N6-(dimethylallyl)adenosine (ms(2)i(6)A) at position 37 in tRNAs that read codons beginning with uridine. The polypeptide is tRNA-2-methylthio-N(6)-dimethylallyladenosine synthase (Brucella canis (strain ATCC 23365 / NCTC 10854 / RM-666)).